Reading from the N-terminus, the 589-residue chain is Aspartate--tRNA ligase (589 aa).

Glu-171 is a binding site for L-aspartate. Residues 195-198 (QLFK) form an aspartate region. Arg-217 is a binding site for L-aspartate. Residues 217-219 (RDE) and Gln-226 contribute to the ATP site. Residue His-448 participates in L-aspartate binding. Position 482 (Glu-482) interacts with ATP. An L-aspartate-binding site is contributed by Arg-489. 534–537 (GLDR) serves as a coordination point for ATP.

Belongs to the class-II aminoacyl-tRNA synthetase family. Type 1 subfamily. As to quaternary structure, homodimer.

It is found in the cytoplasm. The catalysed reaction is tRNA(Asp) + L-aspartate + ATP = L-aspartyl-tRNA(Asp) + AMP + diphosphate. Functionally, catalyzes the attachment of L-aspartate to tRNA(Asp) in a two-step reaction: L-aspartate is first activated by ATP to form Asp-AMP and then transferred to the acceptor end of tRNA(Asp). This chain is Aspartate--tRNA ligase, found in Idiomarina loihiensis (strain ATCC BAA-735 / DSM 15497 / L2-TR).